Reading from the N-terminus, the 98-residue chain is N(2)-fixation sustaining protein CowN (98 aa).

Belongs to the CowN family.

Is required to sustain N(2)-dependent growth in the presence of low levels of carbon monoxide (CO). Probably acts by protecting the N(2) fixation ability of the nitrogenase complex, which is inactivated in the presence of CO. The chain is N(2)-fixation sustaining protein CowN from Dechloromonas aromatica (strain RCB).